Here is a 200-residue protein sequence, read N- to C-terminus: Probable nicotinate-nucleotide adenylyltransferase (200 aa).

It belongs to the NadD family.

The enzyme catalyses nicotinate beta-D-ribonucleotide + ATP + H(+) = deamido-NAD(+) + diphosphate. It participates in cofactor biosynthesis; NAD(+) biosynthesis; deamido-NAD(+) from nicotinate D-ribonucleotide: step 1/1. Functionally, catalyzes the reversible adenylation of nicotinate mononucleotide (NaMN) to nicotinic acid adenine dinucleotide (NaAD). This chain is Probable nicotinate-nucleotide adenylyltransferase, found in Clostridium tetani (strain Massachusetts / E88).